Reading from the N-terminus, the 260-residue chain is 5'-nucleotidase SurE (260 aa).

Residues aspartate 8, aspartate 9, serine 43, and asparagine 96 each contribute to the a divalent metal cation site.

Belongs to the SurE nucleotidase family. Requires a divalent metal cation as cofactor.

Its subcellular location is the cytoplasm. It carries out the reaction a ribonucleoside 5'-phosphate + H2O = a ribonucleoside + phosphate. Its function is as follows. Nucleotidase that shows phosphatase activity on nucleoside 5'-monophosphates. This Ruegeria pomeroyi (strain ATCC 700808 / DSM 15171 / DSS-3) (Silicibacter pomeroyi) protein is 5'-nucleotidase SurE.